The following is a 194-amino-acid chain: MSMYKHVKEAWKKPSESYVKGLQWARMQDWRKEPTVVRVEKPTRIDRARSLGYKAKQGVIVARVAVRRGGLRKPRPKHSKKPATMAMNKITMSKSIQRIAEERAAKRYPNLEVLNSYSVGEDGKRKWYEVILIDVNHPSIKNDSSYKNLCTGKHTNRVFRGLTSAGKKGRGLMNKGKGAEKVRPGIRANKKLGK.

The interval 165–194 (AGKKGRGLMNKGKGAEKVRPGIRANKKLGK) is disordered.

Belongs to the eukaryotic ribosomal protein eL15 family.

This is Large ribosomal subunit protein eL15 from Methanococcus aeolicus (strain ATCC BAA-1280 / DSM 17508 / OCM 812 / Nankai-3).